A 427-amino-acid polypeptide reads, in one-letter code: N-acylglucosamine 2-epimerase (427 aa).

A leucine-zipper region spans residues 195 to 216 (LLNLVEQLGEADEELAGKYAEL).

This sequence belongs to the N-acylglucosamine 2-epimerase family. Homodimer. Forms a heterodimer with renin and inhibits its activity.

The catalysed reaction is an N-acyl-D-glucosamine = an N-acyl-D-mannosamine. It participates in amino-sugar metabolism; N-acetylneuraminate degradation. With respect to regulation, inhibited by N-ethylmaleimide, 5,5'-dithiobis-2-nitrobenzoate and iodoacetic acid. Catalyzes the interconversion of N-acetylglucosamine to N-acetylmannosamine. Involved in the N-glycolylneuraminic acid (Neu5Gc) degradation pathway: although human is not able to catalyze formation of Neu5Gc due to the inactive CMAHP enzyme, Neu5Gc is present in food and must be degraded. This Homo sapiens (Human) protein is N-acylglucosamine 2-epimerase (RENBP).